The primary structure comprises 128 residues: MKKLTKTNSHRQQKLASIINEVLIEILKRGKMLDKRLFDCPLTITKIIVTADLKIANCYFFPFNTKLTFDEIMDALNNSKHAIRNFITNRINMKFSPEIRFYYDYGFDNAIKIEELLKNSSFKDKTSE.

This sequence belongs to the RbfA family. In terms of assembly, monomer. Binds 30S ribosomal subunits, but not 50S ribosomal subunits or 70S ribosomes.

Its subcellular location is the cytoplasm. Functionally, one of several proteins that assist in the late maturation steps of the functional core of the 30S ribosomal subunit. Associates with free 30S ribosomal subunits (but not with 30S subunits that are part of 70S ribosomes or polysomes). Required for efficient processing of 16S rRNA. May interact with the 5'-terminal helix region of 16S rRNA. The protein is Ribosome-binding factor A of Rickettsia prowazekii (strain Madrid E).